A 760-amino-acid polypeptide reads, in one-letter code: Heat shock transcription factor (760 aa).

Disordered regions lie at residues 1 to 132 (MIMN…PPVV) and 206 to 276 (FHPL…GPKT). Composition is skewed to polar residues over residues 19-31 (TESN…SSPS) and 38-88 (RSGT…SNKL). The span at 119–130 (DYKDSIDLDKPP) shows a compositional bias: basic and acidic residues. Positions 221 to 247 (AGPANNSQQQQQQQQQDSSIPSDGISS) are enriched in low complexity. Residues 276–385 (TRPAFVMKIW…EDLLDKIVRN (110 aa)) mediate DNA binding. Residues 414-467 (ELETIKMNQYVISEDLRRVRQDNKMLWQENYLNRERNQVQGRTLDKILKFLSVV) are involved in trimerization. 4 disordered regions span residues 492 to 545 (TQYR…NNNN), 560 to 582 (LTNR…EGSI), 609 to 630 (HQPG…SAPS), and 674 to 760 (QEQH…VSDH). Over residues 515-539 (NSRFARDNNQTAQPTYESPLSTSDT) the composition is skewed to polar residues. A Phosphoserine modification is found at Ser-570. Residue Thr-574 is modified to Phosphothreonine. Ser-576 bears the Phosphoserine mark. At Thr-577 the chain carries Phosphothreonine. Over residues 613 to 628 (ATTNNNNHSSSTAISA) the composition is skewed to low complexity. Residues 646-684 (RNLDDLEKHINKEGQSIQQVQDWIDKLAQEQHEKQQQQQ) are a coiled coil. 2 stretches are compositionally biased toward polar residues: residues 701–722 (ATTT…NISF) and 731–742 (PGSNVSSNINDS). Residues 744 to 760 (GNEKKSKKRSIEEVSDH) show a composition bias toward basic and acidic residues.

The protein belongs to the HSF family. In terms of assembly, homotrimer. Homotrimerization increases the affinity of HSF1 to DNA. Interacts with HSP90. Post-translationally, activated by phosphorylation of at least Ser-570, Thr-574, Ser-576 and Thr-577 in response to heat shock. Additional unidentified residues are also phosphorylated in response to heat shock.

Its subcellular location is the nucleus. In terms of biological role, DNA-binding transcription factor that specifically binds heat shock promoter elements (HSE) and activates transcription. With HSP90, is required for the modulation of the chaperone levels in response to growth temperature, rather than the activation of acute responses to sudden thermal transitions. Activated during infection and contributes to full virulence. This is Heat shock transcription factor from Candida albicans (strain SC5314 / ATCC MYA-2876) (Yeast).